The primary structure comprises 607 residues: Protein NRT1/ PTR FAMILY 1.2 (607 aa).

Transmembrane regions (helical) follow at residues 65-85 (TNVLFMWSAASNFTPLLGAFL), 96-116 (ISIASLSSFLGMVLLWLTAML), 138-158 (ASQLALLYSAFALISIGSGGI), 185-205 (FFGWYYASSAVAVLIAFTGIV), 215-235 (IGFGVPAVLMLIAALLFILAS), 374-394 (VPAGSFGMFTIIALALWVILY), 418-438 (MGLGLFMSFLAMAISAMVESF), 460-480 (AMWLVPQYVLHGLAEALTAIG), 496-516 (IAASLFGLGMAVASLLASVVL), and 544-564 (YYWVLAIMSFINVIYYVICSW). Serine 601 carries the post-translational modification Phosphoserine.

It belongs to the major facilitator superfamily. Proton-dependent oligopeptide transporter (POT/PTR) (TC 2.A.17) family. Expressed in shoots, stems, leaves, flowers and siliques. Mainly detected in larger expanded leaves, in the companion cells of major veins.

Its subcellular location is the cell membrane. Its function is as follows. Low-affinity nitrate transporter involved in xylem-to-phloem transfer for redistributing nitrate into developing leaves. Not involved in dipeptides transport. The protein is Protein NRT1/ PTR FAMILY 1.2 (NPF1.2) of Arabidopsis thaliana (Mouse-ear cress).